A 289-amino-acid chain; its full sequence is Arabinogalactan O-methyltransferase 1 (289 aa).

The chain crosses the membrane as a helical span at residues 12–32 (IITGVLLAGLVGGALLFTSFI).

The protein belongs to the methyltransferase superfamily. In terms of assembly, binds to the translation initiation factors TIF3E1.

The protein resides in the golgi apparatus membrane. In terms of biological role, involved in the methylation of glucuronic acid of different plant cell wall component, but mainly on side chains of arabinogalactans. The sequence is that of Arabinogalactan O-methyltransferase 1 (AGM1) from Arabidopsis thaliana (Mouse-ear cress).